Consider the following 927-residue polypeptide: Disks large homolog 1 (927 aa).

Positions 4–64 (RKQDTQRALH…FYEVTLLDNP (61 aa)) constitute an L27 domain. Phosphothreonine is present on Thr115. Phosphoserine is present on residues Ser122, Ser138, and Ser158. Positions 162–212 (PTEAVPPSSPTVPVIPVLPVPAENTVILPTIPQANPPPVLVNTDSLETSTY) are interaction with SH3 domains. The segment at 224-546 (EITLERGNSG…QAVTIVAQYR (323 aa)) is required for interaction with MARCHF2. 3 consecutive PDZ domains span residues 230–317 (GNSG…SEKI), 325–412 (GPKG…YMND), and 474–555 (TGLG…RFEA). Phosphoserine is present on Ser232. A Phosphotyrosine modification is found at Tyr399. Phosphoserine occurs at positions 568, 573, 575, 579, 598, 619, 707, 710, and 857. An SH3 domain is found at 581–651 (KRSLYVRALF…PSKRRVEKKE (71 aa)). Residues 683–858 (RKFPFYKNKD…ISIFIKPKSM (176 aa)) form the Guanylate kinase-like domain. The segment at 691-719 (KDQSEQETSDADQHITSNASDSESSYRGQ) is disordered. Over residues 704-717 (HITSNASDSESSYR) the composition is skewed to polar residues.

Belongs to the MAGUK family. Homotetramer. Interacts (via guanylate kinase-like domain) with DLGAP1, DLGAP2, DLGAP3, DLGAP4 and MAP1A. Interacts (via guanylate kinase-like domain) with KIF13B. May interact with HTR2A. Interacts (via PDZ domains) with GRIA1. Interacts (via PDZ domains) with GRIN2A. Interacts (via PDZ domains) with KCND2 and KCND3. Interacts (via PDZ domains) with KCNA1, KCNA2, KCNA3 and KCNA4. Interacts (via PDZ domains) with ADGRA3. Interacts with KCNF1. Interacts with CAMK2. Interacts with cytoskeleton-associated protein EPB41. Interacts with cytoskeleton-associated protein EZR. Found in a complex with KCNA5 and CAV3. Found in a complex with APC and CTNNB1. Interacts (via PDZ domains) with APC. Interacts with CDH1 through binding to PIK3R1. Forms multiprotein complexes with CASK, LIN7A, LIN7B, LIN7C, APBA1, and KCNJ12. Interacts with TOPK. Forms a tripartite complex composed of DLG1, MPP7 and LIN7 (LIN7A or LIN7C). May interact with TJAP1. Interacts with PTEN. Interacts with FRMPD4 (via C-terminus). Interacts with LRFN1, LRFN2 and LRFN4. Interacts with SFPQ. Interacts (via PDZ domains) with ADGRA2 (via PDZ-binding motif). Interacts with ADAM10; this interaction recruits ADAM10 to the cell membrane during long-term depression in hippocampal neurons. Interacts with DGKI (via PDZ-binding motif). Interacts (via PDZ domains) with MARCHF2 (via PDZ domain); the interaction leads to DLG1 ubiqtuitination and degradation. Interacts (via N-terminus) with MPP3; this interaction connects CADM1 with DLG1 and links CADM1 with the regulatory subunit of phosphoinositide-3-kinase (PI3K) by forming a multiprotein complex and participates in cell spreading. Phosphorylated by MAPK12. Phosphorylation of Ser-232 regulates association with GRIN2A. In terms of processing, ubiquitinated; by MARCHF2 which results in its degradation.

Its subcellular location is the cell membrane. It localises to the basolateral cell membrane. It is found in the endoplasmic reticulum membrane. The protein resides in the postsynaptic density. The protein localises to the synapse. Its subcellular location is the sarcolemma. It localises to the apical cell membrane. It is found in the cell junction. The protein resides in the cytoplasm. Its function is as follows. Essential multidomain scaffolding protein required for normal development. Recruits channels, receptors and signaling molecules to discrete plasma membrane domains in polarized cells. Promotes epithelial cell layer barrier function via maintaining cell-cell adhesion. May also play a role in adherens junction assembly, signal transduction, cell proliferation, synaptogenesis and lymphocyte activation. Regulates the excitability of cardiac myocytes by modulating the functional expression of Kv4 channels. Functional regulator of Kv1.5 channel. During long-term depression in hippocampal neurons, it recruits ADAM10 to the plasma membrane. The polypeptide is Disks large homolog 1 (DLG1) (Canis lupus familiaris (Dog)).